A 345-amino-acid polypeptide reads, in one-letter code: Fe(3+) ions import ATP-binding protein FbpC (345 aa).

The ABC transporter domain occupies 4-236; it reads LELHGIGKSY…PVDEPTASFL (233 aa). 36-43 lines the ATP pocket; the sequence is GPSGSGKT.

Belongs to the ABC transporter superfamily. Fe(3+) ion importer (TC 3.A.1.10) family. The complex is composed of two ATP-binding proteins (FbpC), two transmembrane proteins (FbpB) and a solute-binding protein (FbpA).

Its subcellular location is the cell inner membrane. The enzyme catalyses Fe(3+)(out) + ATP + H2O = Fe(3+)(in) + ADP + phosphate + H(+). Its function is as follows. Part of the ABC transporter complex FbpABC involved in Fe(3+) ions import. Responsible for energy coupling to the transport system. This Serratia marcescens protein is Fe(3+) ions import ATP-binding protein FbpC.